The following is a 464-amino-acid chain: tRNA-2-methylthio-N(6)-dimethylallyladenosine synthase (464 aa).

Residues 19–135 (GSYWITTFGC…LENLLERVDL (117 aa)) enclose the MTTase N-terminal domain. Cysteine 28, cysteine 64, cysteine 98, cysteine 170, cysteine 174, and cysteine 177 together coordinate [4Fe-4S] cluster. The 238-residue stretch at 156–393 (RDSSICGWVN…NELVETTSRK (238 aa)) folds into the Radical SAM core domain. The 69-residue stretch at 396-464 (QRYLNNIESV…SFSLSGQIYK (69 aa)) folds into the TRAM domain.

The protein belongs to the methylthiotransferase family. MiaB subfamily. As to quaternary structure, monomer. [4Fe-4S] cluster serves as cofactor.

The protein resides in the cytoplasm. It catalyses the reaction N(6)-dimethylallyladenosine(37) in tRNA + (sulfur carrier)-SH + AH2 + 2 S-adenosyl-L-methionine = 2-methylsulfanyl-N(6)-dimethylallyladenosine(37) in tRNA + (sulfur carrier)-H + 5'-deoxyadenosine + L-methionine + A + S-adenosyl-L-homocysteine + 2 H(+). Functionally, catalyzes the methylthiolation of N6-(dimethylallyl)adenosine (i(6)A), leading to the formation of 2-methylthio-N6-(dimethylallyl)adenosine (ms(2)i(6)A) at position 37 in tRNAs that read codons beginning with uridine. The sequence is that of tRNA-2-methylthio-N(6)-dimethylallyladenosine synthase from Prochlorococcus marinus subsp. pastoris (strain CCMP1986 / NIES-2087 / MED4).